We begin with the raw amino-acid sequence, 91 residues long: Putative defective replication initiation protein (91 aa).

The protein is Putative defective replication initiation protein (repA1) of Escherichia coli (strain K12).